The primary structure comprises 881 residues: Putative SWI/SNF-related matrix-associated actin-dependent regulator of chromatin subfamily A member 3-like 1 (881 aa).

Positions 272–486 (DKRPDPLRGG…YSLMAFLRFE (215 aa)) constitute a Helicase ATP-binding domain. An ATP-binding site is contributed by 285 to 292 (DDMGLGKT). Residues 308–343 (STSTPTEEPLDGEGDKIEKKGKKRGRGKSSESVTRK) are disordered. Residues 437-440 (DEAH) carry the DEAH box motif. An RING-type zinc finger spans residues 635–674 (CPICISPPTNIIITRCAHIFCRACILQTLQRSKPLCPLCR). Residues 681 to 703 (DLYNAPPPPPDSSNTDGEDAKSS) are disordered. One can recognise a Helicase C-terminal domain in the interval 711 to 876 (ALLSLLMASR…EREVNVEDVV (166 aa)).

Belongs to the SNF2/RAD54 helicase family. RAD16 subfamily.

The protein resides in the nucleus. Its function is as follows. Possesses intrinsic ATP-dependent nucleosome-remodeling activity. This activity may be required for transcriptional activation or repression of specific target promoters. The polypeptide is Putative SWI/SNF-related matrix-associated actin-dependent regulator of chromatin subfamily A member 3-like 1 (Arabidopsis thaliana (Mouse-ear cress)).